The following is a 162-amino-acid chain: MGLETEKADVQLFMDDDSYSHHSCVDYADPEKFADSGRDRDPNRLNSNLQVGFEDVIAEPESTHSFDKVWICSHALFEISKYVIYKFLTVFLAIPLAFAAGIIFATLSCLHIWIIMPFVKTCLMVLPSVQTIWRSVTDAVIAPLCTSVGRVFSSVSLQLSRD.

Residues 1-86 (MGLETEKADV…FEISKYVIYK (86 aa)) lie on the Cytoplasmic side of the membrane. Tyrosine 19 is subject to Phosphotyrosine; by SRC. Phosphoserine occurs at positions 20 and 23. Residue tyrosine 27 is modified to Phosphotyrosine; by SRC. Position 36 is a phosphoserine (serine 36). The segment at residues 87–107 (FLTVFLAIPLAFAAGIIFATL) is an intramembrane region (helical). Topologically, residues 108 to 162 (SCLHIWIIMPFVKTCLMVLPSVQTIWRSVTDAVIAPLCTSVGRVFSSVSLQLSRD) are cytoplasmic.

This sequence belongs to the caveolin family. Monomer or homodimer. Interacts with CAV1; the interaction forms a stable heterooligomeric complex that is required for targeting to lipid rafts and for caveolae formation. Tyrosine phosphorylated forms do not form heterooligomers with the Tyr-19-phosphorylated form existing as a monomer or dimer, and the Tyr-27-form as a monomer only. Interacts (tyrosine phosphorylated form) with the SH2 domain-containing proteins, RASA1, NCK1 and SRC. Interacts (tyrosine phosphorylated form) with INSR, the interaction (Tyr-27-phosphorylated form) is increased on insulin stimulation. Interacts (Tyr-19 phosphorylated form) with MAPK1 (phosphorylated form); the interaction, promoted by insulin, leads to nuclear location and MAPK1 activation. Interacts with STAT3; the interaction is increased on insulin-induced tyrosine phosphorylation leading to STAT activation. Phosphorylated on serine and tyrosine residues. CAV1 promotes phosphorylation on Ser-23 which then targets the complex to the plasma membrane, lipid rafts and caveolae. Phosphorylation on Ser-36 appears to modulate mitosis in endothelial cells. Phosphorylation on both Tyr-19 and Tyr-27 is required for insulin-induced 'Ser-727' phosphorylation of STAT3 and its activation. Phosphorylation on Tyr-19 is required for insulin-induced phosphorylation of MAPK1 and DNA binding of STAT3. Tyrosine phosphorylation is induced by both EGF and insulin (By. similarity).

It is found in the nucleus. It localises to the cytoplasm. The protein resides in the golgi apparatus membrane. Its subcellular location is the cell membrane. The protein localises to the membrane. It is found in the caveola. May act as a scaffolding protein within caveolar membranes. Interacts directly with G-protein alpha subunits and can functionally regulate their activity. Acts as an accessory protein in conjunction with CAV1 in targeting to lipid rafts and driving caveolae formation. The Ser-36 phosphorylated form has a role in modulating mitosis in endothelial cells. Positive regulator of cellular mitogenesis of the MAPK signaling pathway. Required for the insulin-stimulated nuclear translocation and activation of MAPK1 and STAT3, and the subsequent regulation of cell cycle progression. The sequence is that of Caveolin-2 (CAV2) from Carollia perspicillata (Seba's short-tailed bat).